We begin with the raw amino-acid sequence, 1394 residues long: Tubulin glycylase 3E (1394 aa).

Disordered stretches follow at residues 201-230, 563-582, 620-663, and 682-706; these read KKKS…QRKE, NQKD…QNSI, DENE…TSNF, and STVK…NLKE. The span at 205–216 shows a compositional bias: low complexity; the sequence is NFQNKSQSQLNN. The span at 217 to 230 shows a compositional bias: basic and acidic residues; it reads HKNEEKKPSQQRKE. Low complexity predominate over residues 568 to 582; that stretch reads QSNQTSSVISQQNSI. The span at 627 to 655 shows a compositional bias: polar residues; that stretch reads KENVLQQKKNQSNQIVTSQQQSNNYFKQE. Residues 682–703 show a composition bias toward low complexity; sequence STVKNSDNNNQNQTNPQNQNTN. In terms of domain architecture, TTL spans 911 to 1250; it reads RFIFNITVIA…QNNLQEDLEI (340 aa). ATP-binding positions include 1058–1061, K1079, and D1081; that span reads QKYI. IQ domains lie at 1320–1349 and 1348–1377; these read QYWG…QKFT and FTFA…QQQT.

The protein resides in the cell projection. It is found in the cilium. Its subcellular location is the cytoplasm. It localises to the cytoskeleton. The protein localises to the cilium axoneme. Probable glycylase which modifies tubulin, generating side chains of glycine on the gamma-carboxyl groups of specific glutamate residues within the C-terminal tail of tubulin. The sequence is that of Tubulin glycylase 3E (TTLL3E) from Tetrahymena thermophila (strain SB210).